We begin with the raw amino-acid sequence, 320 residues long: Beta-carotene 3-hydroxylase, chloroplastic (320 aa).

The transit peptide at 1–78 (METQFLVSGR…EKELRGKLVV (78 aa)) directs the protein to the chloroplast. A run of 2 helical transmembrane segments spans residues 118–138 (YLVA…LSVY) and 152–172 (LSEM…MEFW). The 128-residue stretch at 165 to 292 (AAVGMEFWAR…KFNGVPYGLF (128 aa)) folds into the Fatty acid hydroxylase domain. The Histidine box-1 motif lies at 177 to 182 (HEALWH). The short motif at 189–193 (HESHH) is the Histidine box-2 element. 2 consecutive transmembrane segments (helical) span residues 204–224 (DIFA…GFFH) and 228–248 (IPGL…AYMF). Positions 250–255 (HDGLVH) match the Histidine box-3 motif. The Histidine box-4 motif lies at 276–280 (HTLHH).

Belongs to the sterol desaturase family.

It is found in the plastid. It localises to the chloroplast membrane. It carries out the reaction all-trans-beta-carotene + 4 reduced [2Fe-2S]-[ferredoxin] + 2 O2 + 4 H(+) = all-trans-zeaxanthin + 4 oxidized [2Fe-2S]-[ferredoxin] + 2 H2O. Functionally, nonheme diiron monooxygenase involved in the biosynthesis of xanthophylls. Specific for beta-ring hydroxylations of beta-carotene. Uses ferredoxin as an electron donor. The chain is Beta-carotene 3-hydroxylase, chloroplastic (BHY) from Gentiana lutea (Yellow gentian).